The chain runs to 80 residues: Cytochrome c oxidase subunit 7B, mitochondrial (80 aa).

The transit peptide at 1 to 24 (MLPLAKNALSRLQVRSIQQVVARQ) directs the protein to the mitochondrion. The Mitochondrial matrix segment spans residues 25-32 (SHQKKTPT). The chain crosses the membrane as a helical span at residues 33 to 59 (FHDKYGNAVLAGGSIFCISAWTYTATQ). The Mitochondrial intermembrane segment spans residues 60-80 (IGIEWNLSPVGRVTPKEWRDQ).

Belongs to the cytochrome c oxidase VIIb family. In terms of assembly, component of the cytochrome c oxidase (complex IV, CIV), a multisubunit enzyme composed of 14 subunits. The complex is composed of a catalytic core of 3 subunits MT-CO1, MT-CO2 and MT-CO3, encoded in the mitochondrial DNA, and 11 supernumerary subunits COX4I, COX5A, COX5B, COX6A, COX6B, COX6C, COX7A, COX7B, COX7C, COX8 and NDUFA4, which are encoded in the nuclear genome. The complex exists as a monomer or a dimer and forms supercomplexes (SCs) in the inner mitochondrial membrane with NADH-ubiquinone oxidoreductase (complex I, CI) and ubiquinol-cytochrome c oxidoreductase (cytochrome b-c1 complex, complex III, CIII), resulting in different assemblies (supercomplex SCI(1)III(2)IV(1) and megacomplex MCI(2)III(2)IV(2)).

The protein localises to the mitochondrion inner membrane. It participates in energy metabolism; oxidative phosphorylation. Functionally, component of the cytochrome c oxidase, the last enzyme in the mitochondrial electron transport chain which drives oxidative phosphorylation. The respiratory chain contains 3 multisubunit complexes succinate dehydrogenase (complex II, CII), ubiquinol-cytochrome c oxidoreductase (cytochrome b-c1 complex, complex III, CIII) and cytochrome c oxidase (complex IV, CIV), that cooperate to transfer electrons derived from NADH and succinate to molecular oxygen, creating an electrochemical gradient over the inner membrane that drives transmembrane transport and the ATP synthase. Cytochrome c oxidase is the component of the respiratory chain that catalyzes the reduction of oxygen to water. Electrons originating from reduced cytochrome c in the intermembrane space (IMS) are transferred via the dinuclear copper A center (CU(A)) of subunit 2 and heme A of subunit 1 to the active site in subunit 1, a binuclear center (BNC) formed by heme A3 and copper B (CU(B)). The BNC reduces molecular oxygen to 2 water molecules using 4 electrons from cytochrome c in the IMS and 4 protons from the mitochondrial matrix. Plays a role in proper central nervous system (CNS) development in vertebrates. This Rattus norvegicus (Rat) protein is Cytochrome c oxidase subunit 7B, mitochondrial (Cox7b).